The sequence spans 107 residues: MPRAARKQQKNLIQNIAVQRMWRLFERAKVELPENPERSRHYVQLIRNISMRNRISIPREIKSRICKHCYSFLTPGYNARYRLNEGFVVITCEHCGKEMRYPYKKLK.

Residues cysteine 66, cysteine 69, cysteine 92, and cysteine 95 each coordinate Zn(2+).

The protein belongs to the eukaryotic/archaeal RNase P protein component 4 family. As to quaternary structure, consists of a catalytic RNA component and at least 4-5 protein subunits. It depends on Zn(2+) as a cofactor.

Its subcellular location is the cytoplasm. The enzyme catalyses Endonucleolytic cleavage of RNA, removing 5'-extranucleotides from tRNA precursor.. In terms of biological role, part of ribonuclease P, a protein complex that generates mature tRNA molecules by cleaving their 5'-ends. The sequence is that of Ribonuclease P protein component 4 from Methanosarcina mazei (strain ATCC BAA-159 / DSM 3647 / Goe1 / Go1 / JCM 11833 / OCM 88) (Methanosarcina frisia).